A 156-amino-acid chain; its full sequence is Translation initiation factor IF-1, chloroplastic (156 aa).

Residues 1–35 are disordered; that stretch reads MAASLTLMTSPPCSRSSKSPSPSPSPSLSCNQQQQ. The transit peptide at 1 to 49 directs the protein to the chloroplast; the sequence is MAASLTLMTSPPCSRSSKSPSPSPSPSLSCNQQQQYKPLLHHQWPPQIS. Positions 10–20 are enriched in low complexity; that stretch reads SPPCSRSSKSP. In terms of domain architecture, S1-like spans 72–148; sequence GGSPSVQEQK…TRGRITYRLR (77 aa).

Belongs to the IF-1 family. As to quaternary structure, component of the 30S ribosomal translation pre-initiation complex which assembles on the 30S ribosome in the order IF-2 and IF-3, IF-1 and N-formylmethionyl-tRNA(fMet); mRNA recruitment can occur at any time during PIC assembly.

The protein resides in the plastid. It is found in the chloroplast. Its function is as follows. One of the essential components for the initiation of protein synthesis. Stabilizes the binding of IF-2 and IF-3 on the 30S subunit to which N-formylmethionyl-tRNA(fMet) subsequently binds. Helps modulate mRNA selection, yielding the 30S pre-initiation complex (PIC). Upon addition of the 50S ribosomal subunit IF-1, IF-2 and IF-3 are released leaving the mature 70S translation initiation complex. This is Translation initiation factor IF-1, chloroplastic (infA) from Mesembryanthemum crystallinum (Common ice plant).